The primary structure comprises 403 residues: Enoyl-[acyl-carrier-protein] reductase [NADH] (403 aa).

NAD(+) contacts are provided by residues 49-54 (GASSGY), 75-76 (FE), 112-113 (DA), and 141-142 (LA). Tyr-227 contributes to the substrate binding site. Tyr-237 functions as the Proton donor in the catalytic mechanism. NAD(+)-binding positions include Lys-246 and 276-278 (VVT).

It belongs to the TER reductase family. As to quaternary structure, monomer.

The catalysed reaction is a 2,3-saturated acyl-[ACP] + NAD(+) = a (2E)-enoyl-[ACP] + NADH + H(+). It participates in lipid metabolism; fatty acid biosynthesis. Functionally, involved in the final reduction of the elongation cycle of fatty acid synthesis (FAS II). Catalyzes the reduction of a carbon-carbon double bond in an enoyl moiety that is covalently linked to an acyl carrier protein (ACP). The polypeptide is Enoyl-[acyl-carrier-protein] reductase [NADH] (Pseudomonas putida (strain GB-1)).